Consider the following 601-residue polypeptide: Pyranose 2-oxidase (601 aa).

His-151 is modified (tele-8alpha-FAD histidine). Positions 406 and 408 each coordinate substrate. The Proton acceptor role is filled by His-505. Asn-558 is an active-site residue. Residues Lys-577 to Ala-601 are disordered. Positions Gly-591–Ala-601 are enriched in acidic residues.

The protein belongs to the GMC oxidoreductase family. In terms of assembly, homotetramer. FAD is required as a cofactor.

It catalyses the reaction D-glucose + O2 = 2-dehydro-D-glucose + H2O2. Its function is as follows. Catalyzes the oxidation of various aldopyranoses and disaccharides on carbon-2 to the corresponding 2-keto sugars concomitant with the reduction of O(2) to H(2)O(2). The protein is Pyranose 2-oxidase (p2ox) of Emericella nidulans (strain FGSC A4 / ATCC 38163 / CBS 112.46 / NRRL 194 / M139) (Aspergillus nidulans).